The sequence spans 454 residues: DNA primase small subunit (454 aa).

Residues E66, D131, and D133 contribute to the active site. The Mg(2+) site is built by D131 and D133. Mn(2+)-binding residues include D131 and D133. 131–133 (DID) provides a ligand contact to a ribonucleoside 5'-triphosphate. Zn(2+) is bound by residues C143, C144, C150, and C153. Residues 143–153 (CCSKTNICEKC) carry the Zinc knuckle motif motif. An a ribonucleoside 5'-triphosphate-binding site is contributed by 182 to 188 (SGRRGIH). D333 lines the Mg(2+) pocket. A Mn(2+)-binding site is contributed by D333. Residue 342 to 345 (HLLK) participates in a ribonucleoside 5'-triphosphate binding. The interval 385 to 420 (DKNSQNDNGHGPTMETNTTENQKDNARGQSNKGHGF) is disordered. Composition is skewed to polar residues over residues 389–404 (QNDN…NTTE) and 411–420 (RGQSNKGHGF).

Belongs to the eukaryotic-type primase small subunit family. As to quaternary structure, heterodimer of a catalytic subunit spp1/pri1 and a regulatory subunit spp2/pri2, also known as the DNA primase complex. Component of the alpha DNA polymerase complex (also known as the alpha DNA polymerase-primase complex) consisting of four subunits: the catalytic subunit pol1, the accessory subunit spb70/pol12, and the primase complex subunits spp1/pri1 and spp2/pri2 respectively. Requires Mg(2+) as cofactor. Mn(2+) is required as a cofactor.

The protein localises to the nucleus. The catalysed reaction is ssDNA + n NTP = ssDNA/pppN(pN)n-1 hybrid + (n-1) diphosphate.. Its function is as follows. Catalytic subunit of the DNA primase complex and component of the DNA polymerase alpha complex (also known as the alpha DNA polymerase-primase complex - primosome/replisome) which play an essential role in the initiation of DNA synthesis. During the S phase of the cell cycle, the DNA polymerase alpha complex (composed of a catalytic subunit pol1, an accessory subunit spb70/pol12 and two primase subunits, the catalytic subunit spp1/pri1 and the regulatory subunit spp2/pri2) is recruited to DNA at the replicative forks. The primase subunit of the polymerase alpha complex initiates DNA synthesis by oligomerising short RNA primers on both leading and lagging strands. The polypeptide is DNA primase small subunit (Schizosaccharomyces pombe (strain 972 / ATCC 24843) (Fission yeast)).